The sequence spans 345 residues: Phosphate acyltransferase (345 aa).

The protein belongs to the PlsX family. In terms of assembly, homodimer. Probably interacts with PlsY.

The protein localises to the cytoplasm. It carries out the reaction a fatty acyl-[ACP] + phosphate = an acyl phosphate + holo-[ACP]. The protein operates within lipid metabolism; phospholipid metabolism. In terms of biological role, catalyzes the reversible formation of acyl-phosphate (acyl-PO(4)) from acyl-[acyl-carrier-protein] (acyl-ACP). This enzyme utilizes acyl-ACP as fatty acyl donor, but not acyl-CoA. This Wolbachia sp. subsp. Drosophila simulans (strain wRi) protein is Phosphate acyltransferase.